Here is an 86-residue protein sequence, read N- to C-terminus: Anti-adapter protein IraP (86 aa).

Residues 1–36 (MKNLIAELLLKLAQKEEESKELVAQVEALEIIVTAM) are a coiled coil.

This sequence belongs to the IraP family. As to quaternary structure, interacts with RssB.

The protein localises to the cytoplasm. Its function is as follows. Inhibits RpoS proteolysis by regulating RssB activity, thereby increasing the stability of the sigma stress factor RpoS especially during phosphate and magnesium starvation, but also in stationary phase and during nitrogen starvation. Its effect on RpoS stability is due to its interaction with RssB, which probably blocks the interaction of RssB with RpoS, and the consequent delivery of the RssB-RpoS complex to the ClpXP protein degradation pathway. This chain is Anti-adapter protein IraP, found in Salmonella choleraesuis (strain SC-B67).